Reading from the N-terminus, the 348-residue chain is Rhodopsin (348 aa).

Position 1 is an N-acetylmethionine (methionine 1). Residues 1 to 36 (MNGTEGPDFYIPMSNQTGVVRSPFEYPQYYLAEPWQ) are Extracellular-facing. 2 N-linked (GlcNAc...) asparagine glycosylation sites follow: asparagine 2 and asparagine 15. The chain crosses the membrane as a helical span at residues 37–61 (FSMLAAYMFLLIVLGFPINFLTLYV). Over 62–73 (TVQHKKLRTPLN) the chain is Cytoplasmic. The helical transmembrane segment at 74–96 (YILLNLAVADLFMVLGGFTTTLY) threads the bilayer. Topologically, residues 97-110 (TSLHGYFVFGPTGC) are extracellular. Cysteine 110 and cysteine 187 are oxidised to a cystine. The chain crosses the membrane as a helical span at residues 111–133 (NVEGFFATLGGEIALWSLVVLAI). The 'Ionic lock' involved in activated form stabilization motif lies at 134 to 136 (ERY). At 134-152 (ERYVVVCKPMSNFRFGENH) the chain is on the cytoplasmic side. The chain crosses the membrane as a helical span at residues 153 to 173 (AIMGVAFTWIMALACAAPPLV). Topologically, residues 174-202 (GWSRYIPEGMQCSCGIDYYTLKPEVNNES) are extracellular. Glutamate 201 provides a ligand contact to Zn(2+). Residues 203 to 224 (FVIYMFVVHFTIPLIIIFFCYG) form a helical membrane-spanning segment. The Cytoplasmic segment spans residues 225–252 (QLVFTVKEAAAQQQESATTQKAEKEVTR). Residues 253–274 (MVIIMVIAFLICWVPYASVAFY) traverse the membrane as a helical segment. Topologically, residues 275–286 (IFTHQGSNFGPI) are extracellular. Residue glutamine 279 participates in Zn(2+) binding. The chain crosses the membrane as a helical span at residues 287-308 (FMTIPAFFAKSSSIYNPVIYIM). An N6-(retinylidene)lysine modification is found at lysine 296. Residues 309–348 (MNKQFRNCMLTTICCGKNPLGDDEASATASKTETSQVAPA) are Cytoplasmic-facing. Residues cysteine 322 and cysteine 323 are each lipidated (S-palmitoyl cysteine). Residues 330-348 (DDEASATASKTETSQVAPA) form an interaction with SAG region. Serine 334 carries the phosphoserine modification. A Phosphothreonine modification is found at threonine 336. The residue at position 338 (serine 338) is a Phosphoserine. Phosphothreonine is present on residues threonine 340 and threonine 342. A Phosphoserine modification is found at serine 343.

This sequence belongs to the G-protein coupled receptor 1 family. Opsin subfamily. Homodimer. May form a complex composed of RHO, GRK1 and RCVRN in a Ca(2+)-dependent manner; RCVRN prevents the interaction between GRK1 and RHO. Interacts with GRK1. Interacts (phosphorylated form) with SAG. Interacts with GNAT1. Interacts with GNAT3. SAG and G-proteins compete for a common binding site. Interacts with PRCD; the interaction promotes PRCD stability. Forms a complex with ASAP1 and ARF4. Forms a complex with ASAP1, RAB11A, Rabin8/RAB3IP, ARF4 and RAB11FIP3; the complex regulates Golgi-to-cilia rhodopsin/RHO transport in photoreceptors. In terms of processing, phosphorylated on some or all of the serine and threonine residues present in the C-terminal region. Contains one covalently linked retinal chromophore. Upon light absorption, the covalently bound 11-cis-retinal is converted to all-trans-retinal. After hydrolysis of the Schiff base and release of the covalently bound all-trans-retinal, active rhodopsin is regenerated by binding of a fresh molecule of 11-cis-retinal.

It is found in the membrane. The protein localises to the cell projection. Its subcellular location is the cilium. The protein resides in the photoreceptor outer segment. Its function is as follows. Photoreceptor required for image-forming vision at low light intensity. Required for photoreceptor cell viability after birth. Light-induced isomerization of 11-cis to all-trans retinal triggers a conformational change that activates signaling via G-proteins. Subsequent receptor phosphorylation mediates displacement of the bound G-protein alpha subunit by the arrestin SAG and terminates signaling. In Oryctolagus cuniculus (Rabbit), this protein is Rhodopsin (RHO).